A 452-amino-acid polypeptide reads, in one-letter code: Bifunctional protein GlmU (452 aa).

The interval 1 to 224 is pyrophosphorylase; sequence MNIVILAAGQ…EWEVLGVNSK (224 aa). UDP-N-acetyl-alpha-D-glucosamine contacts are provided by residues 6–9, Lys-20, Gln-71, 76–77, 98–100, Gly-134, Glu-149, Asn-164, and Asn-222; these read LAAG, GT, and YGD. Position 100 (Asp-100) interacts with Mg(2+). Residue Asn-222 participates in Mg(2+) binding. A linker region spans residues 225 to 245; that stretch reads VQLAELERQHQLNLAGELLVA. Residues 246–452 form an N-acetyltransferase region; that stretch reads GVRLADPARI…GWERPKKVKK (207 aa). Residues Arg-328 and Lys-346 each contribute to the UDP-N-acetyl-alpha-D-glucosamine site. Catalysis depends on His-358, which acts as the Proton acceptor. 2 residues coordinate UDP-N-acetyl-alpha-D-glucosamine: Tyr-361 and Asn-372. Acetyl-CoA contacts are provided by residues Ala-375, 381–382, Ser-400, Ala-418, and Arg-435; that span reads NY.

This sequence in the N-terminal section; belongs to the N-acetylglucosamine-1-phosphate uridyltransferase family. In the C-terminal section; belongs to the transferase hexapeptide repeat family. In terms of assembly, homotrimer. It depends on Mg(2+) as a cofactor.

The protein resides in the cytoplasm. The catalysed reaction is alpha-D-glucosamine 1-phosphate + acetyl-CoA = N-acetyl-alpha-D-glucosamine 1-phosphate + CoA + H(+). It carries out the reaction N-acetyl-alpha-D-glucosamine 1-phosphate + UTP + H(+) = UDP-N-acetyl-alpha-D-glucosamine + diphosphate. Its pathway is nucleotide-sugar biosynthesis; UDP-N-acetyl-alpha-D-glucosamine biosynthesis; N-acetyl-alpha-D-glucosamine 1-phosphate from alpha-D-glucosamine 6-phosphate (route II): step 2/2. It participates in nucleotide-sugar biosynthesis; UDP-N-acetyl-alpha-D-glucosamine biosynthesis; UDP-N-acetyl-alpha-D-glucosamine from N-acetyl-alpha-D-glucosamine 1-phosphate: step 1/1. The protein operates within bacterial outer membrane biogenesis; LPS lipid A biosynthesis. Catalyzes the last two sequential reactions in the de novo biosynthetic pathway for UDP-N-acetylglucosamine (UDP-GlcNAc). The C-terminal domain catalyzes the transfer of acetyl group from acetyl coenzyme A to glucosamine-1-phosphate (GlcN-1-P) to produce N-acetylglucosamine-1-phosphate (GlcNAc-1-P), which is converted into UDP-GlcNAc by the transfer of uridine 5-monophosphate (from uridine 5-triphosphate), a reaction catalyzed by the N-terminal domain. The chain is Bifunctional protein GlmU from Dechloromonas aromatica (strain RCB).